A 388-amino-acid chain; its full sequence is Flavin-dependent monooxygenase (388 aa).

FAD is bound by residues P26 to V27 and Y45 to D48. Position 54 (R54) interacts with NADPH. FAD is bound by residues D61, R117, and L139. Substrate contacts are provided by Q192 and R213. FAD-binding positions include D311 and G321–V324.

This sequence belongs to the aromatic-ring hydroxylase family. TetX subfamily. Monomer. FAD serves as cofactor.

It localises to the cytoplasm. It catalyses the reaction a tetracycline + NADPH + O2 + H(+) = an 11a-hydroxytetracycline + NADP(+) + H2O. It carries out the reaction tetracycline + NADPH + O2 + H(+) = 11a-hydroxytetracycline + NADP(+) + H2O. The catalysed reaction is tigecycline + NADPH + O2 + H(+) = 11a-hydroxytigecycline + NADP(+) + H2O. The enzyme catalyses oxytetracycline + NADPH + O2 + H(+) = 11a-hydroxy-oxytetracycline + NADP(+) + H2O. Anhydrotetracycline, a poor substrate, prevents tetracycline degradation in vitro. Its function is as follows. An FAD-requiring monooxygenase active on tetracycline antibiotic derivatives, which leads to their inactivation. Hydroxylates carbon 11a of oxytetracycline and tigecycline. Acts on many tetracycline analogs (chlorotetracycline, demeclocycline, doxycycline, minocycline, oxytetracyclinee), probably by monooxygenization. Tigecycline, a new generation tetracycline antibiotic, is rendered less effective against E.coli by this monooxygenation, is much weaker at inhibiting translation in vitro and binds Mg(2+) considerably less well. Expression in E.coli BW25113 reduces its growth rate about 5%. The reaction probably proceeds by FAD reduction by NADPH and, second, hydroxylation of antibiotic in a ping-pong mechanism. Degrades chlortetracycline, probably by monooxygenation. Slowly oxidizes anhydrotetracycline, the final substrate in tetracycline biosynthesis. The sequence is that of Flavin-dependent monooxygenase from Bacteroides thetaiotaomicron.